The following is a 452-amino-acid chain: F-box only protein 47 (452 aa).

The 51-residue stretch at 41–91 (FGNFKALPLEIFQIILKYLSVKDISMLSMVSKTVSQHIINYISTSSGSKRL) folds into the F-box domain.

Part of a SCF (SKP1-cullin-F-box) protein ligase complex. Widely expressed, with highest levels in kidney, liver and pancreas. Down-regulated in tumors.

Its function is as follows. Probably recognizes and binds to some phosphorylated proteins and promotes their ubiquitination and degradation. The sequence is that of F-box only protein 47 from Homo sapiens (Human).